Reading from the N-terminus, the 417-residue chain is Gamma-glutamyl phosphate reductase (417 aa).

Belongs to the gamma-glutamyl phosphate reductase family.

It is found in the cytoplasm. It catalyses the reaction L-glutamate 5-semialdehyde + phosphate + NADP(+) = L-glutamyl 5-phosphate + NADPH + H(+). The protein operates within amino-acid biosynthesis; L-proline biosynthesis; L-glutamate 5-semialdehyde from L-glutamate: step 2/2. In terms of biological role, catalyzes the NADPH-dependent reduction of L-glutamate 5-phosphate into L-glutamate 5-semialdehyde and phosphate. The product spontaneously undergoes cyclization to form 1-pyrroline-5-carboxylate. This Chlorobium phaeobacteroides (strain BS1) protein is Gamma-glutamyl phosphate reductase.